We begin with the raw amino-acid sequence, 208 residues long: Large ribosomal subunit protein uL4 (208 aa).

The segment at 49–78 (HKAKTRAEVRGGGKKPFRQKGTGNARQGST) is disordered. Residues 69 to 78 (GTGNARQGST) are compositionally biased toward polar residues.

Belongs to the universal ribosomal protein uL4 family. As to quaternary structure, part of the 50S ribosomal subunit.

In terms of biological role, one of the primary rRNA binding proteins, this protein initially binds near the 5'-end of the 23S rRNA. It is important during the early stages of 50S assembly. It makes multiple contacts with different domains of the 23S rRNA in the assembled 50S subunit and ribosome. Its function is as follows. Forms part of the polypeptide exit tunnel. This Chlorobaculum tepidum (strain ATCC 49652 / DSM 12025 / NBRC 103806 / TLS) (Chlorobium tepidum) protein is Large ribosomal subunit protein uL4.